The primary structure comprises 1322 residues: Sal-like protein 1 (1322 aa).

The segment at 1-41 (MSRRKQAKPQHFQSDPEVASLPRRDGDTEKGQPSRPTKSKD) is disordered. Residues 22 to 41 (PRRDGDTEKGQPSRPTKSKD) are compositionally biased toward basic and acidic residues. Residues 43–65 (HVCGRCCAEFFELSDLLLHKKSC) form a C2H2-type 1; atypical zinc finger. The segment at 78-128 (PASPAKTFPPGPSLNDPDDQMKDAANKADQEDCSDLSEPKGLDREESMEVE) is disordered. 2 stretches are compositionally biased toward basic and acidic residues: residues 96-107 (DQMKDAANKADQ) and 114-124 (SEPKGLDREES). Lys440 participates in a covalent cross-link: Glycyl lysine isopeptide (Lys-Gly) (interchain with G-Cter in SUMO2). 2 C2H2-type zinc fingers span residues 450-472 (HKCR…LRSH) and 478-500 (FKCN…FQRH). Residues 578-659 (PIPISHSAAS…GGPGGTTFTN (82 aa)) form a disordered region. Residues 584 to 594 (SAASPQGSVKS) are compositionally biased toward polar residues. Phosphoserine is present on residues Ser591, Ser594, and Ser596. Over residues 629 to 645 (NMASSAVPTAGNSTLNS) the composition is skewed to polar residues. Residues Lys672, Lys689, and Lys700 each participate in a glycyl lysine isopeptide (Lys-Gly) (interchain with G-Cter in SUMO2) cross-link. 3 C2H2-type zinc fingers span residues 705 to 727 (NECI…YRTH), 733 to 755 (FKCK…YSVH), and 765 to 787 (HSCP…IRMH). Disordered stretches follow at residues 789-855 (GGQI…SSPL) and 891-961 (SMEG…GLSP). Acidic residues predominate over residues 819–832 (DLDNFSDENMEECP). The span at 842–855 (SADASQDSLSSSPL) shows a compositional bias: low complexity. Polar residues predominate over residues 898-935 (TNDSSSVGGDMESQSAGSPAISESTSSMQALSPSNSTQ). Over residues 936 to 948 (EFHKSPGMEEKPQ) the composition is skewed to basic and acidic residues. Ser940 bears the Phosphoserine mark. Glycyl lysine isopeptide (Lys-Gly) (interchain with G-Cter in SUMO2) cross-links involve residues Lys946 and Lys981. 2 C2H2-type zinc fingers span residues 1000–1022 (TACD…YRSH) and 1028–1050 (FICT…MLTH). Lys1085 participates in a covalent cross-link: Glycyl lysine isopeptide (Lys-Gly) (interchain with G-Cter in SUMO2). Residues 1094 to 1119 (VSPQDSKDAPTSHVPQGPLSSSATSP) are disordered. C2H2-type zinc fingers lie at residues 1133 to 1155 (HYCN…ERTH) and 1161 to 1183 (FACT…MGTH). Residues Lys1218, Lys1297, and Lys1317 each participate in a glycyl lysine isopeptide (Lys-Gly) (interchain with G-Cter in SUMO2) cross-link.

The protein belongs to the sal C2H2-type zinc-finger protein family. May associate with NuRD histone deacetylase complex (HDAC). Interacts with components of HDAC complex including HDAC1, HDAC2, RBBP4, RBPP7, MTA1 and MTA2. Interacts with CCNQ. Interacts with NSD2 (via PHD-type zinc fingers 1, 2 and 3). In terms of tissue distribution, expressed in the metanephric mesenchyme surrounding ureteric bud.

Its subcellular location is the nucleus. Its function is as follows. Transcriptional repressor involved in organogenesis. Plays an essential role in ureteric bud invasion during kidney development. In Mus musculus (Mouse), this protein is Sal-like protein 1 (Sall1).